Reading from the N-terminus, the 171-residue chain is UPF0312 protein SAR2769 (171 aa).

It belongs to the UPF0312 family.

This Staphylococcus aureus (strain MRSA252) protein is UPF0312 protein SAR2769.